The sequence spans 211 residues: Ribonuclease P protein component 3 (211 aa).

This sequence belongs to the eukaryotic/archaeal RNase P protein component 3 family. Consists of a catalytic RNA component and at least 4-5 protein subunits.

The protein resides in the cytoplasm. It carries out the reaction Endonucleolytic cleavage of RNA, removing 5'-extranucleotides from tRNA precursor.. In terms of biological role, part of ribonuclease P, a protein complex that generates mature tRNA molecules by cleaving their 5'-ends. The sequence is that of Ribonuclease P protein component 3 from Aeropyrum pernix (strain ATCC 700893 / DSM 11879 / JCM 9820 / NBRC 100138 / K1).